Consider the following 303-residue polypeptide: Nucleotide-binding protein Acry_0446 (303 aa).

Residue 10-17 participates in ATP binding; that stretch reads GLSGAGRN. 54–57 is a binding site for GTP; that stretch reads DART.

It belongs to the RapZ-like family.

Displays ATPase and GTPase activities. In Acidiphilium cryptum (strain JF-5), this protein is Nucleotide-binding protein Acry_0446.